Here is a 221-residue protein sequence, read N- to C-terminus: Small ribosomal subunit protein uS4c (221 aa).

Positions 26-53 are disordered; sequence RKRTDNRCMPGQHRKKRNDSTKKTKNSK. A compositionally biased stretch (basic residues) spans 37–53; sequence QHRKKRNDSTKKTKNSK. In terms of domain architecture, S4 RNA-binding spans 103–161; that stretch reads MRLDNIVFRLGMAPTIPAARQLVNHGHIVVNNKKVDISSYQCQSQDVISVTKNKTIRTL.

It belongs to the universal ribosomal protein uS4 family. In terms of assembly, part of the 30S ribosomal subunit. Contacts protein S5. The interaction surface between S4 and S5 is involved in control of translational fidelity.

Its subcellular location is the plastid. The protein localises to the chloroplast. One of the primary rRNA binding proteins, it binds directly to 16S rRNA where it nucleates assembly of the body of the 30S subunit. Its function is as follows. With S5 and S12 plays an important role in translational accuracy. In Pleurastrum terricola (Filamentous green alga), this protein is Small ribosomal subunit protein uS4c (rps4).